The primary structure comprises 131 residues: MWQEFKKFAVRGNVIDLAVGVIIGGAFGKIVSSLVNDIIMPLVGLILGGIDFSGLSWKVGEAEVKYGAFLQTVVDFLVIAFSIFLFVKLLNNLHERIKKQEETKQTAPTMTKEQQLLTEIRDLLKQQKETP.

A run of 3 helical transmembrane segments spans residues 8–28 (FAVR…GAFG), 30–50 (IVSS…LGGI), and 67–87 (GAFL…FLFV).

Belongs to the MscL family. As to quaternary structure, homopentamer.

The protein resides in the cell membrane. In terms of biological role, channel that opens in response to stretch forces in the membrane lipid bilayer. May participate in the regulation of osmotic pressure changes within the cell. The sequence is that of Large-conductance mechanosensitive channel from Anoxybacillus flavithermus (strain DSM 21510 / WK1).